The chain runs to 383 residues: 8-amino-7-oxononanoate synthase (383 aa).

Arg21 serves as a coordination point for substrate. 108–109 (GF) is a binding site for pyridoxal 5'-phosphate. His133 contributes to the substrate binding site. Residues Ser179, His207, and Thr233 each contribute to the pyridoxal 5'-phosphate site. Lys236 bears the N6-(pyridoxal phosphate)lysine mark. A substrate-binding site is contributed by Thr350.

The protein belongs to the class-II pyridoxal-phosphate-dependent aminotransferase family. BioF subfamily. In terms of assembly, homodimer. The cofactor is pyridoxal 5'-phosphate.

It catalyses the reaction 6-carboxyhexanoyl-[ACP] + L-alanine + H(+) = (8S)-8-amino-7-oxononanoate + holo-[ACP] + CO2. It participates in cofactor biosynthesis; biotin biosynthesis. Functionally, catalyzes the decarboxylative condensation of pimeloyl-[acyl-carrier protein] and L-alanine to produce 8-amino-7-oxononanoate (AON), [acyl-carrier protein], and carbon dioxide. This Cronobacter sakazakii (strain ATCC BAA-894) (Enterobacter sakazakii) protein is 8-amino-7-oxononanoate synthase.